Reading from the N-terminus, the 362-residue chain is Molybdenum import ATP-binding protein ModC (362 aa).

The 235-residue stretch at 2–236 (ASPIEVRLQM…LDLPLAMGSD (235 aa)) folds into the ABC transporter domain. Residue 34-41 (GPSGSGKT) participates in ATP binding. The region spanning 297 to 362 (QSSILNRLPV…AQIKAVAVLA (66 aa)) is the Mop domain.

This sequence belongs to the ABC transporter superfamily. Molybdate importer (TC 3.A.1.8) family. The complex is composed of two ATP-binding proteins (ModC), two transmembrane proteins (ModB) and a solute-binding protein (ModA).

The protein resides in the cell inner membrane. It catalyses the reaction molybdate(out) + ATP + H2O = molybdate(in) + ADP + phosphate + H(+). Part of the ABC transporter complex ModABC involved in molybdenum import. Responsible for energy coupling to the transport system. The chain is Molybdenum import ATP-binding protein ModC from Pseudomonas syringae pv. syringae (strain B728a).